The following is a 246-amino-acid chain: Probable transcriptional regulatory protein CLB_3102 (246 aa).

It belongs to the TACO1 family.

The protein localises to the cytoplasm. In Clostridium botulinum (strain ATCC 19397 / Type A), this protein is Probable transcriptional regulatory protein CLB_3102.